A 360-amino-acid chain; its full sequence is 3-dehydroquinate synthase (360 aa).

Residues G105 to D109, T129 to T130, K142, K151, and T169 to T172 each bind NAD(+). E184, H247, and H263 together coordinate Zn(2+).

It belongs to the sugar phosphate cyclases superfamily. Dehydroquinate synthase family. Requires Co(2+) as cofactor. Zn(2+) is required as a cofactor. NAD(+) serves as cofactor.

The protein localises to the cytoplasm. It catalyses the reaction 7-phospho-2-dehydro-3-deoxy-D-arabino-heptonate = 3-dehydroquinate + phosphate. The protein operates within metabolic intermediate biosynthesis; chorismate biosynthesis; chorismate from D-erythrose 4-phosphate and phosphoenolpyruvate: step 2/7. In terms of biological role, catalyzes the conversion of 3-deoxy-D-arabino-heptulosonate 7-phosphate (DAHP) to dehydroquinate (DHQ). The polypeptide is 3-dehydroquinate synthase (Acetivibrio thermocellus (strain ATCC 27405 / DSM 1237 / JCM 9322 / NBRC 103400 / NCIMB 10682 / NRRL B-4536 / VPI 7372) (Clostridium thermocellum)).